The primary structure comprises 88 residues: Alpha-latrotoxin associated low molecular weight protein 2 (88 aa).

The signal sequence occupies residues 1–19 (MLKLICIAFLVTVLTLVAG). 3 cysteine pairs are disulfide-bonded: cysteine 30-cysteine 66, cysteine 46-cysteine 62, and cysteine 49-cysteine 75.

The protein belongs to the arthropod CHH/MIH/GIH/VIH hormone family. In terms of tissue distribution, expressed by the venom gland.

Its subcellular location is the secreted. Functionally, may increase the toxicity of alpha-latrotoxin and/or other venom components. Is non-toxic to mice and to the cockroach Periplaneta americana. This chain is Alpha-latrotoxin associated low molecular weight protein 2, found in Latrodectus hesperus (Western black widow spider).